A 127-amino-acid polypeptide reads, in one-letter code: Small ribosomal subunit protein uS11 (127 aa).

It belongs to the universal ribosomal protein uS11 family. Part of the 30S ribosomal subunit. Interacts with proteins S7 and S18. Binds to IF-3.

Its function is as follows. Located on the platform of the 30S subunit, it bridges several disparate RNA helices of the 16S rRNA. Forms part of the Shine-Dalgarno cleft in the 70S ribosome. This Streptococcus pyogenes serotype M1 protein is Small ribosomal subunit protein uS11.